The chain runs to 578 residues: Thrombomodulin (578 aa).

An N-terminal signal peptide occupies residues 1-16 (MLRVLLLGVLAPAGLG). Topologically, residues 17-518 (LPTPAQPQPR…SPSPVGPVHS (502 aa)) are extracellular. The C-type lectin domain occupies 31-167 (MEHDCFQLFR…CAAEADGFLC (137 aa)). Residue N114 is glycosylated (N-linked (GlcNAc...) asparagine). 19 disulfides stabilise this stretch: C137–C158, C246–C257, C253–C266, C268–C281, C289–C297, C293–C309, C311–C324, C330–C341, C337–C350, C352–C363, C370–C379, C375–C389, C391–C405, C409–C414, C418–C426, C428–C440, C446–C455, C451–C464, and C466–C480. EGF-like domains lie at 242–282 (GAWD…RSCA) and 285–325 (AEHS…HRCE). N300 carries an N-linked (GlcNAc...) asparagine glycan. One can recognise an EGF-like 3; calcium-binding domain in the interval 326 to 364 (DVDDCIQVPSLCPQLCVNTRGAFECHCYPGYELVDNECV). Position 343 is a (3R)-3-hydroxyasparagine (N343). EGF-like domains lie at 366-406 (PVDP…HRCQ) and 405-441 (CQMF…FMCT). N410 carries an N-linked (GlcNAc...) asparagine glycan. The region spanning 442–481 (DIDECENGECPEACRNLPGTYECICGPDSPLAGQVATDCG) is the EGF-like 6; calcium-binding domain. A disordered region spans residues 483–512 (IISDPDGDSDSGSGEPPVTPTPGVTPSPSP). 2 O-linked (Xyl...) (chondroitin sulfate) serine glycosylation sites follow: S493 and S495. Over residues 499-512 (PVTPTPGVTPSPSP) the composition is skewed to pro residues. Residues 519–539 (GVLIGISIASLSLVVALLALL) traverse the membrane as a helical segment. Residues 540–578 (CHLRKKQGAPRAELEYKCGAPAKEVVLQHVRTEQMPQKL) are Cytoplasmic-facing.

In terms of assembly, interacts with ITGAL, ITGAM and ITGB2. Interacts with thrombin/F2; this interaction switches the specificity of thrombin from a procoagulant to an anticoagulant and antifibrinolytic protease. Interacts with ANGP1 and ANGP2; these interactions significantly inhibit the generation of activated PC and TAFIa/CPB2 by the thrombin/thrombomodulin complex. Interacts with PF4; this interaction enhances generation of activated protein C. Interacts with HMGB1; this interaction inhibits HMGB1 inflammatory activity. N-glycosylated. In terms of processing, the iron and 2-oxoglutarate dependent 3-hydroxylation of aspartate and asparagine is (R) stereospecific within EGF domains. Expressed in lung, liver, spleen, kidney, pancreas and lymph node. Low expression in heart, cerebrum, urinary bladder and uterus.

The protein resides in the membrane. Functionally, endothelial cell receptor that plays a critical role in regulating several physiological processes including hemostasis, coagulation, fibrinolysis, inflammation, and angiogenesis. Acts as a cofactor for thrombin activation of protein C/PROC on the surface of vascular endothelial cells leading to initiation of the activated protein C anticoagulant pathway. Also accelerates the activation of the plasma carboxypeptidase B2/CPB2, which catalyzes removal of C-terminal basic amino acids from its substrates including kinins or anaphylatoxins leading to fibrinolysis inhibition. Plays critical protective roles in changing the cleavage specificity of protease-activated receptor 1/PAR1, inhibiting endothelial cell permeability and inflammation. Suppresses inflammation distinctly from its anticoagulant cofactor activity by sequestering HMGB1 thereby preventing it from engaging cellular receptors such as RAGE and contributing to the inflammatory response. The chain is Thrombomodulin (THBD) from Canis lupus familiaris (Dog).